The sequence spans 303 residues: UDP-3-O-acyl-N-acetylglucosamine deacetylase (303 aa).

Zn(2+) is bound by residues His78, His237, and Asp241. The Proton donor role is filled by His264.

It belongs to the LpxC family. It depends on Zn(2+) as a cofactor.

The enzyme catalyses a UDP-3-O-[(3R)-3-hydroxyacyl]-N-acetyl-alpha-D-glucosamine + H2O = a UDP-3-O-[(3R)-3-hydroxyacyl]-alpha-D-glucosamine + acetate. Its pathway is glycolipid biosynthesis; lipid IV(A) biosynthesis; lipid IV(A) from (3R)-3-hydroxytetradecanoyl-[acyl-carrier-protein] and UDP-N-acetyl-alpha-D-glucosamine: step 2/6. Its function is as follows. Catalyzes the hydrolysis of UDP-3-O-myristoyl-N-acetylglucosamine to form UDP-3-O-myristoylglucosamine and acetate, the committed step in lipid A biosynthesis. This Pseudomonas entomophila (strain L48) protein is UDP-3-O-acyl-N-acetylglucosamine deacetylase.